A 91-amino-acid chain; its full sequence is UPF0728 protein v1g117062 (91 aa).

Belongs to the UPF0728 family.

The protein is UPF0728 protein v1g117062 of Nematostella vectensis (Starlet sea anemone).